A 312-amino-acid chain; its full sequence is Olfactory receptor 8K3 (312 aa).

At 1–25 the chain is on the extracellular side; it reads MEQHNLTTVNEFILTGITDIAELQA. A glycan (N-linked (GlcNAc...) asparagine) is linked at Asn-5. The chain crosses the membrane as a helical span at residues 26-46; sequence PLFALFLMIYVISVMGNLGMI. At 47-54 the chain is on the cytoplasmic side; sequence VLTKLDSR. Residues 55–75 traverse the membrane as a helical segment; it reads LQTPMYFFLRHLAFMDLGYST. The Extracellular portion of the chain corresponds to 76–99; it reads TVGPKMLVNFVVDKNIISYYFCAT. A disulfide bond links Cys-97 and Cys-189. The helical transmembrane segment at 100-120 threads the bilayer; it reads QLAFFLVFIGSELFILSAMSY. The Cytoplasmic portion of the chain corresponds to 121–139; sequence DLYVAICNPLLYTVIMSRR. The helical transmembrane segment at 140 to 160 threads the bilayer; the sequence is VCQVLVAIPYLYCTFISLLVT. Residues 161–197 lie on the Extracellular side of the membrane; sequence IKIFTLSFCGYNVISHFYCDSLPLLPLLCSNTHEIEL. The chain crosses the membrane as a helical span at residues 198 to 217; that stretch reads IILIFAAIDLISSLLIVLLS. The Cytoplasmic portion of the chain corresponds to 218-236; the sequence is YLLILVAILRMNSAGRQKA. Residues 237–257 form a helical membrane-spanning segment; it reads FSTCGAHLTVVIVFYGTLLFM. The Extracellular segment spans residues 258–270; sequence YVQPKSSHSFDTD. A helical membrane pass occupies residues 271–291; the sequence is KVASIFYTLVIPMLNPLIYSL. The Cytoplasmic segment spans residues 292–312; the sequence is RNKDVKYALRRTWNNLCNIFV.

Belongs to the G-protein coupled receptor 1 family.

Its subcellular location is the cell membrane. Functionally, odorant receptor. The chain is Olfactory receptor 8K3 (OR8K3) from Homo sapiens (Human).